The chain runs to 45 residues: Large ribosomal subunit protein bL34 (45 aa).

Positions 1-24 (MTKRTFGGTSRKRKRVSGFRVRMR) are disordered. Over residues 10–24 (SRKRKRVSGFRVRMR) the composition is skewed to basic residues.

This sequence belongs to the bacterial ribosomal protein bL34 family.

The chain is Large ribosomal subunit protein bL34 from Prochlorococcus marinus (strain MIT 9303).